The primary structure comprises 252 residues: Chitooligosaccharide deacetylase (252 aa).

Mg(2+)-binding residues include His61 and His125.

This sequence belongs to the YdjC deacetylase family. ChbG subfamily. In terms of assembly, homodimer. Mg(2+) is required as a cofactor.

The protein localises to the cytoplasm. The catalysed reaction is N,N'-diacetylchitobiose + H2O = N-acetyl-beta-D-glucosaminyl-(1-&gt;4)-D-glucosamine + acetate. It catalyses the reaction diacetylchitobiose-6'-phosphate + H2O = N'-monoacetylchitobiose-6'-phosphate + acetate. The protein operates within glycan degradation; chitin degradation. Its function is as follows. Involved in the degradation of chitin. ChbG is essential for growth on the acetylated chitooligosaccharides chitobiose and chitotriose but is dispensable for growth on cellobiose and chitosan dimer, the deacetylated form of chitobiose. Deacetylation of chitobiose-6-P and chitotriose-6-P is necessary for both the activation of the chb promoter by the regulatory protein ChbR and the hydrolysis of phosphorylated beta-glucosides by the phospho-beta-glucosidase ChbF. Catalyzes the removal of only one acetyl group from chitobiose-6-P to yield monoacetylchitobiose-6-P, the inducer of ChbR and the substrate of ChbF. The chain is Chitooligosaccharide deacetylase from Salmonella paratyphi B (strain ATCC BAA-1250 / SPB7).